The sequence spans 142 residues: Snaclec GPIB-binding protein subunit alpha (142 aa).

Disulfide bonds link C6-C17, C39-C136, and C111-C128. The C-type lectin domain occupies 13-137 (HRQYCYKFFQ…CVEGNPFVCK (125 aa)).

The protein belongs to the snaclec family. Heterodimer of subunits alpha and beta; disulfide-linked. Expressed by the venom gland.

The protein resides in the secreted. In terms of biological role, binds to platelet GPIb (subunit alpha) (GP1BA) and functions as a receptor blocker for vWF binding to GPIb. The platelet GPIb-binding site resides on the GPIB-BP subunit beta and not on the alpha subunit. At a final concentration of 104 nM totally abolishes vWF-dependent shear-induced platelet aggregation (SIPA) at a high shear stress, but had no effect on SIPA at a low shear stress. The polypeptide is Snaclec GPIB-binding protein subunit alpha (Bothrops jararaca (Jararaca)).